The chain runs to 445 residues: Glycine--tRNA ligase (445 aa).

The substrate site is built by Arg-97 and Glu-145. Residues 177–179 (RNE), 187–192 (FRTCEF), 262–263 (EV), and 308–311 (GLTR) contribute to the ATP site. 192 to 196 (FEQME) serves as a coordination point for substrate. Position 304-308 (304-308 (ETSAG)) interacts with substrate.

The protein belongs to the class-II aminoacyl-tRNA synthetase family. Homodimer.

The protein localises to the cytoplasm. The catalysed reaction is tRNA(Gly) + glycine + ATP = glycyl-tRNA(Gly) + AMP + diphosphate. Its function is as follows. Catalyzes the attachment of glycine to tRNA(Gly). The protein is Glycine--tRNA ligase of Borreliella burgdorferi (strain ATCC 35210 / DSM 4680 / CIP 102532 / B31) (Borrelia burgdorferi).